Reading from the N-terminus, the 342-residue chain is Polyprenyl transferase trt2 (342 aa).

9 consecutive transmembrane segments (helical) span residues 71–91, 95–115, 141–161, 163–183, 187–207, 216–236, 261–278, 282–304, and 319–339; these read VVGVAYTAAIAPVSLPATVLL, IILSLWGFLIRSGGCAWNDLI, AALLTAIIFGCGGLLLLLLPS, CTVEAGIILFFALLYPFGKRF, PQLILVNIAWAIPMAMSSLEV, TLSMCIFIASVIVMIDVVYAC, LAYGFFFSGAISLLLGGV, LGLPFIVFSVGGHIFGFLRFLSV, and AKSSCLLATVFWVLGFFLEYL.

The protein belongs to the UbiA prenyltransferase family. Mg(2+) serves as cofactor.

It localises to the membrane. It carries out the reaction 3,5-dimethylorsellinate + (2E,6E)-farnesyl diphosphate = (3R)-3-farnesyl-6-hydroxy-2,3,5-trimethyl-4-oxocyclohexa-1,5-diene-1-carboxylate + diphosphate + H(+). Its pathway is secondary metabolite biosynthesis; terpenoid biosynthesis. In terms of biological role, polyprenyl transferase; part of the gene cluster that mediates the biosynthesis of terretonin, a fungal meroterpenoid that acts as a mycotoxin. The first step of the pathway is the synthesis of 3,5-dimethylorsellinic acid (DMOA) by the polyketide synthase trt4. DMOA is then prenylated into farnesyl-DMOA by the polyprenyl transferase trt2. Methylation by the methyltransferase trt5 then leads to farnesyl-DMOA methyl ester which is further subject to epoxidation by the FAD-dependent monooxygenase trt8 to yield epoxyfarnesyl-DMOA methyl ester. Cyclization of epoxyfarnesyl-DMOA methyl ester by the terpene cyclase trt1 leads to a tetracycle intermediate which is in turn converted to preterretonin. Dehydrogenase trt9 comes next to transform preterretonin to preterrenoid. The FAD-dependent monooxygenase trt3 is then required for the C-hydroxylation at C16 of preterrenoid to yield terrenoid. The cytochrome P450 trt6 catalyzes three successive oxidations to transform terrenoid into an unstable intermediate, which then undergoes the D-ring expansion and unusual rearrangement of the methoxy group to afford the core skeleton of terretonin. Trt14 catalyzes the D-ring expansion of terretonin involving intramolecular methoxy rearrangement as well as the hydrolysis of the expanded D-ring and the methyl ester moiety. Finally, the nonheme iron-dependent dioxygenase trt7 accomplishes the last two oxidation reactions steps to complete the biosynthesis of terretonin. Terretonin C is produced via spontaneous decarboxylation of the terretonin precursor. Another shunt product of the terretonin biosynthesis is dihydrofarnesyl-DMOA, derived from epoxyfarnesyl-DMOA through hydrolysis of the epoxide. The sequence is that of Polyprenyl transferase trt2 from Aspergillus terreus (strain NIH 2624 / FGSC A1156).